A 177-amino-acid chain; its full sequence is Large ribosomal subunit protein uL6 (177 aa).

This sequence belongs to the universal ribosomal protein uL6 family. Part of the 50S ribosomal subunit.

In terms of biological role, this protein binds to the 23S rRNA, and is important in its secondary structure. It is located near the subunit interface in the base of the L7/L12 stalk, and near the tRNA binding site of the peptidyltransferase center. The protein is Large ribosomal subunit protein uL6 of Rhodopseudomonas palustris (strain BisB5).